Here is a 214-residue protein sequence, read N- to C-terminus: Non-structural protein NP-1 (214 aa).

Disordered stretches follow at residues 1-85 and 192-214; these read MSSE…TRTN and ESEE…NASN. The segment covering 33-43 has biased composition (basic residues); it reads SRSRSPIRRHG. Residues 44–55 show a composition bias toward basic and acidic residues; sequence EKNLEYAHHNNQ. Residues 56 to 71 show a composition bias toward polar residues; the sequence is DNRQSSYTASKTSDQA. Over residues 192 to 201 the composition is skewed to acidic residues; it reads ESEEVTDEEM.

The protein belongs to the Bocaparvovirus Non-structural protein NP-1 family.

The protein resides in the host nucleus. Its function is as follows. Required for the expression of the capsid proteins. Performs the splicing and internal polyadenylation of the viral capsid-encoding mRNA precursor, which allows its maturation and expression. Transactivates the viral promoter. This is Non-structural protein NP-1 (NP1) from Human bocavirus 4 (HBoV4).